The following is a 619-amino-acid chain: Tyrosine-protein kinase ZAP-70 (619 aa).

Residues 10–102 (FFYGSISRAE…GLPCNLRKPC (93 aa)) form the SH2 1 domain. Residues 103-162 (NRPSGLEPQPGVFDCLRDAMVRDYVRQTWKLEGEALEQAIISQAPQVEKLIATTAHERMP) form an interdomain A region. Residues 163 to 254 (WYHSSLTREE…GLIYCLKEAC (92 aa)) form the SH2 2 domain. Tyr-248 carries the phosphotyrosine modification. Residues 255–337 (PNSSASNASG…KKLFLKRDNL (83 aa)) form an interdomain B region. The segment at 260–309 (SNASGAAAPTLPAHPSTLTHPQRRIDTLNSDGYTPEPARITSPDKPRPMP) is disordered. Phosphoserine is present on Ser-289. A Phosphotyrosine modification is found at Tyr-292. Phosphotyrosine; by LCK is present on Tyr-315. Tyr-319 is modified (phosphotyrosine). The region spanning 338 to 600 (LIADIELGCG…QRMRACYYSL (263 aa)) is the Protein kinase domain. ATP contacts are provided by residues 345–352 (GCGNFGSV) and Lys-369. Catalysis depends on Asp-461, which acts as the Proton acceptor. Residues Tyr-492 and Tyr-493 each carry the phosphotyrosine modification. Lys-544 participates in a covalent cross-link: Glycyl lysine isopeptide (Lys-Gly) (interchain with G-Cter in ubiquitin). The residue at position 603 (Lys-603) is an N6-acetyllysine.

This sequence belongs to the protein kinase superfamily. Tyr protein kinase family. SYK/ZAP-70 subfamily. In terms of assembly, interacts with CD247/CD3Z; this interaction docks ZAP70 at the stimulated TCR. Interacts with NFAM1. Interacts with adapter protein SLA; this interaction negatively regulates T-cell receptor signaling. Interacts with FCRL3. Interacts with VAV1. Interacts with CBL; this interaction promotes ubiquitination, internalization and subsequent degradation of CD247/CD3Z. Identified in a complex with CBL and UBE2L3. Interacts with SHB. Interacts with adapter protein SLA2; this interaction negatively regulates T-cell receptor signaling. Interacts with CBLB. Interacts (via SH2 domains) with RHOH; this interaction regulates ZAP70 subcellular localization. Interacts with DEF6. Interacts (ubiquitinated form) with OTUD7B and UBASH3B. Phosphorylated on tyrosine residues upon T-cell antigen receptor (TCR) stimulation. Phosphorylation of Tyr-315 and Tyr-319 are essential for ZAP70 positive function on T-lymphocyte activation whereas Tyr-292 has a negative regulatory role. Within the C-terminal kinase domain, Tyr-492 and Tyr-493 are phosphorylated after TCR induction, Tyr-492 playing a negative regulatory role and Tyr-493 a positive. Tyr-493 is dephosphorylated by PTN22. In terms of processing, ubiquitinated in response to T cell activation. Deubiquitinated by OTUD7B. As to expression, expressed in T- and natural killer cells. Also present in early thymocytes and pro/pre B-cells.

Its subcellular location is the cytoplasm. The protein resides in the cell membrane. The enzyme catalyses L-tyrosyl-[protein] + ATP = O-phospho-L-tyrosyl-[protein] + ADP + H(+). Activated by phosphorylation at Tyr-493 in the activation loop. Inhibited by staurosporine. Functionally, tyrosine kinase that plays an essential role in regulation of the adaptive immune response. Regulates motility, adhesion and cytokine expression of mature T-cells, as well as thymocyte development. Also contributes to the development and activation of primary B-lymphocytes. When antigen presenting cells (APC) activate T-cell receptor (TCR), a serie of phosphorylations lead to the recruitment of ZAP70 to the doubly phosphorylated TCR component CD247/CD3Z through ITAM motif at the plasma membrane. This recruitment serves to localization to the stimulated TCR and to relieve its autoinhibited conformation. Release of ZAP70 active conformation is further stabilized by phosphorylation mediated by LCK. Subsequently, ZAP70 phosphorylates at least 2 essential adapter proteins: LAT and LCP2. In turn, a large number of signaling molecules are recruited and ultimately lead to lymphokine production, T-cell proliferation and differentiation. Furthermore, ZAP70 controls cytoskeleton modifications, adhesion and mobility of T-lymphocytes, thus ensuring correct delivery of effectors to the APC. ZAP70 is also required for TCR-CD247/CD3Z internalization and degradation through interaction with the E3 ubiquitin-protein ligase CBL and adapter proteins SLA and SLA2. Thus, ZAP70 regulates both T-cell activation switch on and switch off by modulating TCR expression at the T-cell surface. During thymocyte development, ZAP70 promotes survival and cell-cycle progression of developing thymocytes before positive selection (when cells are still CD4/CD8 double negative). Additionally, ZAP70-dependent signaling pathway may also contribute to primary B-cells formation and activation through B-cell receptor (BCR). The sequence is that of Tyrosine-protein kinase ZAP-70 (ZAP70) from Homo sapiens (Human).